We begin with the raw amino-acid sequence, 264 residues long: Transmembrane protein 41A (264 aa).

The signal sequence occupies residues 1–17; the sequence is MRPLLGLLLVFAGCTFA. A run of 5 helical transmembrane segments spans residues 67-87, 100-122, 153-173, 175-195, and 219-239; these read AYVF…AIPG, GPWL…CYLL, LFFF…FLNL, APIL…GLIP, and WDTV…GTLI. The interval 96–207 is VTT domain; the sequence is GALFGPWLGL…FICVQTGSIL (112 aa). Residue Asn250 is glycosylated (N-linked (GlcNAc...) asparagine).

This sequence belongs to the TMEM41 family.

The protein resides in the membrane. This chain is Transmembrane protein 41A (TMEM41A), found in Homo sapiens (Human).